The chain runs to 537 residues: Cytochrome P450 86A8 (537 aa).

The chain crosses the membrane as a helical span at residues 3 to 23 (ISTALMILSAITAYFLWLTFI). Cysteine 458 is a binding site for heme.

It belongs to the cytochrome P450 family. Requires heme as cofactor. Expressed in leaves, stems, flowers and siliques. Expressed at low levels in roots.

It is found in the membrane. The enzyme catalyses an organic molecule + reduced [NADPH--hemoprotein reductase] + O2 = an alcohol + oxidized [NADPH--hemoprotein reductase] + H2O + H(+). Its function is as follows. Catalyzes the omega-hydroxylation of various fatty acids (FA). Acts on saturated and unsaturated fatty acids with chain lengths from C12 to C18. May be involved in the biosynthesis of cutin in the epidermis which prevents post-genital organ fusions. Hydroxylated FAs may be important for trichome differentiation, establishment of apical dominance and senescence. The polypeptide is Cytochrome P450 86A8 (CYP86A8) (Arabidopsis thaliana (Mouse-ear cress)).